Reading from the N-terminus, the 390-residue chain is Transforming growth factor beta-1 proprotein (390 aa).

An N-terminal signal peptide occupies residues 1-29; that stretch reads MPPSGLRLLPLLLPLPWLLVLTPGRPAAG. A straightjacket domain region spans residues 30-74; that stretch reads LSTCKTIDMELVKRKRIEAIRGQILSKLRLASPPSQGEVPPGPLP. The interval 75-271 is arm domain; that stretch reads EAVLALYNST…ATPLERAQHL (197 aa). 3 N-linked (GlcNAc...) asparagine glycosylation sites follow: Asn82, Asn136, and Asn176. The segment at 226–252 is bowtie tail; sequence DSKDNVLHVEINGISPKRRGDLGTIHD. Residues 244–246 carry the Cell attachment site motif; that stretch reads RGD. 4 disulfides stabilise this stretch: Cys285/Cys294, Cys293/Cys356, Cys322/Cys387, and Cys326/Cys389.

The protein belongs to the TGF-beta family. Homodimer; disulfide-linked. Interacts with the serine proteases, HTRA1 and HTRA3: the interaction with either inhibits TGFB1-mediated signaling and the HTRA protease activity is required for this inhibition. May interact with THSD4; this interaction may lead to sequestration by FBN1 microfibril assembly and attenuation of TGFB signaling. Interacts with CD109, DPT and ASPN. Interacts with EFEMP2. Interacts with TSKU; the interaction contributes to regulation of the hair cycle. Interacts with TGFBR3. As to quaternary structure, homodimer; disulfide-linked. Interacts with transforming growth factor beta-1 (TGF-beta-1) chain; interaction is non-covalent and maintains TGF-beta-1 in a latent state; each latency-associated peptide (LAP) monomer interacts with TGF-beta-1 in the other monomer. Interacts with LTBP1; leading to regulation of TGF-beta-1 activation. Interacts with LRRC32/GARP; leading to regulation of TGF-beta-1 activation on the surface of activated regulatory T-cells (Tregs). Interacts with LRRC33/NRROS; leading to regulation of TGF-beta-1 activation in macrophages and microglia. Interacts (via cell attachment site) with integrins ITGAV and ITGB6 (ITGAV:ITGB6), leading to release of the active TGF-beta-1. Interacts with NREP; the interaction results in a decrease in TGFB1 autoinduction. Interacts with HSP90AB1; inhibits latent TGFB1 activation. In terms of assembly, homodimer; disulfide-linked. Interacts with TGF-beta receptors (TGFBR1 and TGFBR2), leading to signal transduction. Post-translationally, transforming growth factor beta-1 proprotein: The precursor proprotein is cleaved in the Golgi apparatus by FURIN to form Transforming growth factor beta-1 (TGF-beta-1) and Latency-associated peptide (LAP) chains, which remain non-covalently linked, rendering TGF-beta-1 inactive. In terms of processing, N-glycosylated. Deglycosylation leads to activation of Transforming growth factor beta-1 (TGF-beta-1); mechanisms triggering deglycosylation-driven activation of TGF-beta-1 are however unclear. Abundant in the bone matrix. Expressed in cardiomyocytes.

The protein resides in the secreted. It localises to the extracellular space. It is found in the extracellular matrix. Its function is as follows. Transforming growth factor beta-1 proprotein: Precursor of the Latency-associated peptide (LAP) and Transforming growth factor beta-1 (TGF-beta-1) chains, which constitute the regulatory and active subunit of TGF-beta-1, respectively. In terms of biological role, required to maintain the Transforming growth factor beta-1 (TGF-beta-1) chain in a latent state during storage in extracellular matrix. Associates non-covalently with TGF-beta-1 and regulates its activation via interaction with 'milieu molecules', such as LTBP1, LRRC32/GARP and LRRC33/NRROS, that control activation of TGF-beta-1. Interaction with LRRC33/NRROS regulates activation of TGF-beta-1 in macrophages and microglia. Interaction with LRRC32/GARP controls activation of TGF-beta-1 on the surface of activated regulatory T-cells (Tregs). Interaction with integrins (ITGAV:ITGB6 or ITGAV:ITGB8) results in distortion of the Latency-associated peptide chain and subsequent release of the active TGF-beta-1. Multifunctional protein that regulates the growth and differentiation of various cell types and is involved in various processes, such as normal development, immune function, microglia function and responses to neurodegeneration. Activation into mature form follows different steps: following cleavage of the proprotein in the Golgi apparatus, Latency-associated peptide (LAP) and Transforming growth factor beta-1 (TGF-beta-1) chains remain non-covalently linked rendering TGF-beta-1 inactive during storage in extracellular matrix. At the same time, LAP chain interacts with 'milieu molecules', such as LTBP1, LRRC32/GARP and LRRC33/NRROS that control activation of TGF-beta-1 and maintain it in a latent state during storage in extracellular milieus. TGF-beta-1 is released from LAP by integrins (ITGAV:ITGB6 or ITGAV:ITGB8): integrin-binding to LAP stabilizes an alternative conformation of the LAP bowtie tail and results in distortion of the LAP chain and subsequent release of the active TGF-beta-1. Once activated following release of LAP, TGF-beta-1 acts by binding to TGF-beta receptors (TGFBR1 and TGFBR2), which transduce signal. While expressed by many cells types, TGF-beta-1 only has a very localized range of action within cell environment thanks to fine regulation of its activation by Latency-associated peptide chain (LAP) and 'milieu molecules'. Plays an important role in bone remodeling: acts as a potent stimulator of osteoblastic bone formation, causing chemotaxis, proliferation and differentiation in committed osteoblasts. Can promote either T-helper 17 cells (Th17) or regulatory T-cells (Treg) lineage differentiation in a concentration-dependent manner. At high concentrations, leads to FOXP3-mediated suppression of RORC and down-regulation of IL-17 expression, favoring Treg cell development. At low concentrations in concert with IL-6 and IL-21, leads to expression of the IL-17 and IL-23 receptors, favoring differentiation to Th17 cells. Stimulates sustained production of collagen through the activation of CREB3L1 by regulated intramembrane proteolysis (RIP). Mediates SMAD2/3 activation by inducing its phosphorylation and subsequent translocation to the nucleus. Positively regulates odontoblastic differentiation in dental papilla cells, via promotion of IPO7-mediated translocation of phosphorylated SMAD2 to the nucleus and subsequent transcription of target genes. Can induce epithelial-to-mesenchymal transition (EMT) and cell migration in various cell types. The protein is Transforming growth factor beta-1 proprotein (Tgfb1) of Rattus norvegicus (Rat).